Reading from the N-terminus, the 132-residue chain is Cytochrome c-554 (132 aa).

Positions 1 to 24 are cleaved as a signal peptide; that stretch reads MKSISMLTLAASVAFAVTAGQAVA. The 101-residue stretch at 26–126 folds into the Cytochrome c domain; the sequence is GDPAAGEKVF…NVWAYLSQFG (101 aa). Cysteine 38, cysteine 41, histidine 42, and methionine 104 together coordinate heme c.

In terms of processing, binds 1 heme c group covalently per subunit.

It localises to the periplasm. In Methylosinus trichosporium, this protein is Cytochrome c-554.